A 385-amino-acid polypeptide reads, in one-letter code: Selenoprotein P (385 aa).

A signal peptide spans 1-19 (MWRSLGLALALCLLPYGGA). A non-standard amino acid (selenocysteine) is located at residue selenocysteine 59. A cross-link (cysteinyl-selenocysteine (Sec-Cys); in isoform Se-P1) is located at residues 59–62 (UYLC). N-linked (GlcNAc...) asparagine glycosylation is found at asparagine 83, asparagine 174, and asparagine 188. Disulfide bonds link cysteine 168-cysteine 186 and cysteine 172-cysteine 175. Residues 196–262 (KTTEPSEEHN…KGQHRQGHLE (67 aa)) are disordered. The segment covering 243 to 258 (LHHHHHHHKHKGQHRQ) has biased composition (basic residues). Position 264 (selenocysteine 264) is a non-standard amino acid, selenocysteine. Serine 269 bears the Phosphoserine mark. Non-standard amino acids (selenocysteine) are located at selenocysteine 282, selenocysteine 323, selenocysteine 335, and selenocysteine 357. Residues 357 to 385 (UHSQHVSPTEASPNUSUNNKTKKUKUNLN) are disordered. The span at 360–369 (QHVSPTEASP) shows a compositional bias: polar residues. Threonine 365 carries O-linked (Hex...) threonine; partial glycosylation. Non-standard amino acids (selenocysteine) are located at selenocysteine 371, selenocysteine 373, selenocysteine 380, and selenocysteine 382. Basic residues predominate over residues 376 to 385 (KTKKUKUNLN).

The protein belongs to the selenoprotein P family. In terms of processing, isoform Se-P1 contains several disulfide bridges and a selenide-sulfide bond between Sec-59 and Cys-62. These bonds are speculated to serve as redox-active pairs. Phosphorylation sites are present in the extracellular medium. Widely expressed, mainly by the liver. Secreted in plasma.

The protein resides in the secreted. In terms of biological role, might be responsible for some of the extracellular antioxidant defense properties of selenium or might be involved in the transport of selenium. May supply selenium to tissues such as brain and testis. This is Selenoprotein P from Rattus norvegicus (Rat).